We begin with the raw amino-acid sequence, 556 residues long: Threonylcarbamoyladenosine tRNA methylthiotransferase (556 aa).

The tract at residues 17 to 57 (SATDPKPHDRQSARKNIVPRARKRNKNNIQEEEPPADSTIP) is disordered. The 109-residue stretch at 60–168 (QKIWIRTWGC…VVEVVEETIK (109 aa)) folds into the MTTase N-terminal domain. 6 residues coordinate [4Fe-4S] cluster: Cys69, Cys105, Cys134, Cys210, Cys214, and Cys217. The Radical SAM core domain occupies 196 to 427 (RKNPLIEIIS…QLFHSYDPYD (232 aa)). One can recognise a TRAM domain in the interval 427-489 (DHKIGQKQQV…KHFMKGQPVQ (63 aa)). Residues 536–556 (VFLFLTALLAAVIAFVGTKLV) traverse the membrane as a helical segment.

Belongs to the methylthiotransferase family. CDKAL1 subfamily. It depends on [4Fe-4S] cluster as a cofactor.

The protein resides in the endoplasmic reticulum membrane. It carries out the reaction N(6)-L-threonylcarbamoyladenosine(37) in tRNA + (sulfur carrier)-SH + AH2 + 2 S-adenosyl-L-methionine = 2-methylsulfanyl-N(6)-L-threonylcarbamoyladenosine(37) in tRNA + (sulfur carrier)-H + 5'-deoxyadenosine + L-methionine + A + S-adenosyl-L-homocysteine + 2 H(+). Functionally, catalyzes the methylthiolation of N6-threonylcarbamoyladenosine (t(6)A), leading to the formation of 2-methylthio-N6-threonylcarbamoyladenosine (ms(2)t(6)A) at position 37 in tRNAs that read codons beginning with adenine. In Xenopus laevis (African clawed frog), this protein is Threonylcarbamoyladenosine tRNA methylthiotransferase (cdkal1).